Consider the following 96-residue polypeptide: Gastrolith matrix protein (96 aa).

Tandem repeats lie at residues 11-15 (GSAGF), 16-20 (GSTNF), 21-25 (GSSGF), 30-34 (GSTGF), 35-39 (GSAGF), 50-54 (GSAAF), 55-59 (GSSSF), 65-69 (GSTGF), and 70-74 (GSSSF). Residues 11 to 74 (GSAGFGSTNF…GSTGFGSSSF (64 aa)) are 9 X 5 AA tandem repeat of G-S-X-X-F. Positions 75–96 (GSTSGLPYLVVIPNNPAVGGLR) are disordered.

Post-translationally, the N-terminus is blocked. Expressed in the gastroliths.

It is found in the secreted. In terms of biological role, associates with chitin and plays a role in calcification. This Procambarus clarkii (Red swamp crayfish) protein is Gastrolith matrix protein.